Consider the following 205-residue polypeptide: Small heat shock protein hspG12 (205 aa).

Residues 35–205 form the sHSP domain; it reads KTIIDILPPM…YSNTIKININ (171 aa). Residues 99–147 are disordered; sequence PSLLDTKEDEASIEEFDEDDIKPKSTETTSTLSNSKENKKDENKSKSTE. Positions 109–118 are enriched in acidic residues; it reads ASIEEFDEDD. A compositionally biased stretch (basic and acidic residues) spans 134–147; that stretch reads KENKKDENKSKSTE.

Belongs to the small heat shock protein (HSP20) family.

The sequence is that of Small heat shock protein hspG12 (hspG12) from Dictyostelium discoideum (Social amoeba).